The primary structure comprises 272 residues: Large ribosomal subunit protein uL2 (272 aa).

The disordered stretch occupies residues 222-272; sequence GVAMNPIDHPLGGGEGKSSGGRAACTPWGKPEGVKTRKNKRTDKFIIKRRK. The span at 263–272 shows a compositional bias: basic and acidic residues; sequence TDKFIIKRRK.

Belongs to the universal ribosomal protein uL2 family. As to quaternary structure, part of the 50S ribosomal subunit. Forms a bridge to the 30S subunit in the 70S ribosome.

One of the primary rRNA binding proteins. Required for association of the 30S and 50S subunits to form the 70S ribosome, for tRNA binding and peptide bond formation. It has been suggested to have peptidyltransferase activity; this is somewhat controversial. Makes several contacts with the 16S rRNA in the 70S ribosome. The sequence is that of Large ribosomal subunit protein uL2 from Thermodesulfovibrio yellowstonii (strain ATCC 51303 / DSM 11347 / YP87).